Here is a 136-residue protein sequence, read N- to C-terminus: ATP synthase epsilon chain, chloroplastic (136 aa).

Belongs to the ATPase epsilon chain family. As to quaternary structure, F-type ATPases have 2 components, CF(1) - the catalytic core - and CF(0) - the membrane proton channel. CF(1) has five subunits: alpha(3), beta(3), gamma(1), delta(1), epsilon(1). CF(0) has three main subunits: a, b and c.

It localises to the plastid. The protein resides in the chloroplast thylakoid membrane. Its function is as follows. Produces ATP from ADP in the presence of a proton gradient across the membrane. In Cucumis sativus (Cucumber), this protein is ATP synthase epsilon chain, chloroplastic.